Consider the following 190-residue polypeptide: Small ribosomal subunit protein eS7 (190 aa).

The protein belongs to the eukaryotic ribosomal protein eS7 family.

The chain is Small ribosomal subunit protein eS7 (RpS7) from Manduca sexta (Tobacco hawkmoth).